Reading from the N-terminus, the 476-residue chain is Homeobox protein invected (476 aa).

Disordered stretches follow at residues 1 to 43 (MAAV…SEDI), 273 to 331 (KTRY…TSGD), and 347 to 381 (DRPS…AFSG). The segment covering 23-32 (SPNTRDTTSP) has biased composition (polar residues). Composition is skewed to basic and acidic residues over residues 33 to 43 (ECHDDEKSEDI) and 292 to 305 (KLDE…KTPD). A compositionally biased stretch (low complexity) spans 318 to 331 (GSNSGSTSGATSGD). A DNA-binding region (homeobox) is located at residues 372-431 (EKRPRTAFSGPQLARLKHEFAENRYLTERRRQSLAAELGLAEAQIKIWFQNKRAKIKKAS).

This sequence belongs to the engrailed homeobox family. Expressed in the middle silk gland but not in the posterior silk gland during the fourth molt/fifth intermolt period.

It localises to the nucleus. Its function is as follows. This protein might be involved in the compartmentalization of the silk gland. In Bombyx mori (Silk moth), this protein is Homeobox protein invected (INV).